We begin with the raw amino-acid sequence, 201 residues long: Histone-like protein HC2 (201 aa).

Positions 1–69 are disordered; it reads MLGVQKKCST…VAKKATAKKA (69 aa). Basic residues-rich tracts occupy residues 8–50 and 59–69; these read CSTR…KTVA and PVAKKATAKKA.

Belongs to the histone H1/H5 family. HCT subfamily.

Functionally, might have a role in establishing the nucleoid structure of elementary bodies. This is Histone-like protein HC2 (hctB) from Chlamydia trachomatis serovar D (strain ATCC VR-885 / DSM 19411 / UW-3/Cx).